The following is a 418-amino-acid chain: Thyroid hormone receptor alpha (418 aa).

Positions 1–41 are disordered; that stretch reads MDQNLSGLDCLSEPDEKRWPDGKRKRKNSQCMGKSGMSGDS. The modulating stretch occupies residues 1 to 60; that stretch reads MDQNLSGLDCLSEPDEKRWPDGKRKRKNSQCMGKSGMSGDSSVSLLSAGYIPSYLTKDEP. The Zn(2+) site is built by Cys-61, Cys-64, Cys-78, Cys-81, Cys-99, Cys-105, Cys-115, and Cys-118. 2 NR C4-type zinc fingers span residues 61 to 81 and 99 to 123; these read CVVC…CEGC and CKYD…FKKC. The segment at residues 61–135 is a DNA-binding region (nuclear receptor); that stretch reads CVVCSDKATG…VGMAMDLVLD (75 aa). Positions 171 to 415 constitute an NR LBD domain; the sequence is EEWELIRIVT…PPLFLEVFED (245 aa). Arg-236 and Ser-285 together coordinate 3,3',5-triiodo-L-thyronine.

This sequence belongs to the nuclear hormone receptor family. NR1 subfamily. As to expression, highest level of expression in erythrocytes. Also expressed in liver, tail, eye, muscle and skin.

Its subcellular location is the nucleus. Nuclear hormone receptor that can act as a repressor or activator of transcription. High affinity receptor for thyroid hormones, including triiodothyronine and thyroxine. In Aquarana catesbeiana (American bullfrog), this protein is Thyroid hormone receptor alpha (thra).